The following is a 138-amino-acid chain: Superoxide dismutase [Mn] (138 aa).

Histidine 1, histidine 49, aspartate 133, and histidine 137 together coordinate Mn(2+).

The protein belongs to the iron/manganese superoxide dismutase family. Mn(2+) serves as cofactor.

The enzyme catalyses 2 superoxide + 2 H(+) = H2O2 + O2. Destroys superoxide anion radicals which are normally produced within the cells and which are toxic to biological systems. In Mycobacterium celatum, this protein is Superoxide dismutase [Mn] (sodA).